A 300-amino-acid polypeptide reads, in one-letter code: GTPase Era (300 aa).

Positions 7–182 constitute an Era-type G domain; sequence YCGFIAIVGR…LRKGVHHFPE (176 aa). Residues 15 to 22 form a G1 region; that stretch reads GRPNVGKS. 15–22 lines the GTP pocket; that stretch reads GRPNVGKS. The segment at 41–45 is G2; it reads QTTRH. The tract at residues 62–65 is G3; it reads DTPG. Residues 62–66 and 124–127 contribute to the GTP site; these read DTPGL and NKVD. A G4 region spans residues 124–127; sequence NKVD. The tract at residues 154-156 is G5; it reads ISA. A KH type-2 domain is found at 206–283; it reads TGEELPYSVT…HLELWVKVKS (78 aa).

Belongs to the TRAFAC class TrmE-Era-EngA-EngB-Septin-like GTPase superfamily. Era GTPase family. Monomer.

The protein resides in the cytoplasm. It localises to the cell inner membrane. Its function is as follows. An essential GTPase that binds both GDP and GTP, with rapid nucleotide exchange. Plays a role in 16S rRNA processing and 30S ribosomal subunit biogenesis and possibly also in cell cycle regulation and energy metabolism. The polypeptide is GTPase Era (Histophilus somni (strain 129Pt) (Haemophilus somnus)).